A 215-amino-acid chain; its full sequence is Cytochrome b6 (215 aa).

The helical transmembrane segment at 32-52 threads the bilayer; sequence IFYCLGGIVFVSFLIQVATGF. Cys35 serves as a coordination point for heme c. Heme b-binding residues include His86 and His100. The next 3 membrane-spanning stretches (helical) occupy residues 90 to 110, 116 to 136, and 186 to 206; these read VSMM…TGGF, LTWV…VTGY, and LHTF…FLMI. His187 and His202 together coordinate heme b.

It belongs to the cytochrome b family. PetB subfamily. In terms of assembly, the 4 large subunits of the cytochrome b6-f complex are cytochrome b6, subunit IV (17 kDa polypeptide, PetD), cytochrome f and the Rieske protein, while the 4 small subunits are PetG, PetL, PetM and PetN. The complex functions as a dimer. The cofactor is heme b. It depends on heme c as a cofactor.

The protein localises to the plastid. It is found in the chloroplast thylakoid membrane. Functionally, component of the cytochrome b6-f complex, which mediates electron transfer between photosystem II (PSII) and photosystem I (PSI), cyclic electron flow around PSI, and state transitions. In Pyropia yezoensis (Susabi-nori), this protein is Cytochrome b6.